Here is a 520-residue protein sequence, read N- to C-terminus: GMP synthase [glutamine-hydrolyzing] (520 aa).

Positions 13–205 (KIIVLDYGSQ…ALNICKAKGD (193 aa)) constitute a Glutamine amidotransferase type-1 domain. Cysteine 90 acts as the Nucleophile in catalysis. Residues histidine 179 and glutamate 181 contribute to the active site. Residues 206–395 (WSMDNFIDMQ…LGMPDHIVWR (190 aa)) form the GMPS ATP-PPase domain. 233-239 (SGGVDSS) serves as a coordination point for ATP.

Homodimer.

It catalyses the reaction XMP + L-glutamine + ATP + H2O = GMP + L-glutamate + AMP + diphosphate + 2 H(+). The protein operates within purine metabolism; GMP biosynthesis; GMP from XMP (L-Gln route): step 1/1. Functionally, catalyzes the synthesis of GMP from XMP. The chain is GMP synthase [glutamine-hydrolyzing] from Streptococcus pneumoniae serotype 2 (strain D39 / NCTC 7466).